The following is a 605-amino-acid chain: Protein DENND6A (605 aa).

Positions 1 to 20 (MALPGPAVFGPGSRGSLDEA) are disordered. Residues 60 to 239 (HCVCVVGFDL…KVRIPTCHDK (180 aa)) enclose the uDENN domain. Ser-124 bears the Phosphoserine mark. The cDENN domain occupies 265–390 (EVDLFRCFCP…VKVKKLKNLK (126 aa)). Residues 392-525 (LDSKPGVYTS…KTRRKEMTQK (134 aa)) enclose the dDENN domain. Lys-507 carries the post-translational modification N6-methyllysine.

This sequence belongs to the DENND6 family.

It localises to the recycling endosome. The protein localises to the cytoplasm. In terms of biological role, guanine nucleotide exchange factor (GEF) for RAB14. Component of an endocytic recycling pathway that is required for the control of ADAM10 transport, shedding of N-cadherin/CDH2 by ADAM9 or ADAM10 and regulation of cell-cell junctions. Required for RAB14 recruitment to recycling endosomes. The protein is Protein DENND6A (Dennd6a) of Mus musculus (Mouse).